The primary structure comprises 203 residues: ESCRT-related protein CHMP1B (203 aa).

Coiled-coil stretches lie at residues 13–51 (DLKF…MDGA) and 109–140 (GNLQ…NAMA). The segment at 172–203 (PQPAGHAIPTKTEEKVDEDDLSRRLAELKARG) is disordered. Basic and acidic residues predominate over residues 192–203 (LSRRLAELKARG).

This sequence belongs to the SNF7 family. As to quaternary structure, interacts with CHMP1A and LIP5. Interacts with VPS2.2.

The protein localises to the cytoplasm. It localises to the endosome membrane. Involved in ESCRT-dependent multivesicular body (MVB) formation and sorting of endosomal cargo proteins into MVBs. Mediates the MVB sorting of the auxin carriers PIN1, PIN2 and AUX1. Required for embryonic axis establishment and seedling growth. Required for autophagic degradation of plastid proteins. Promotes the efficient sequestration of cargo from plastids into autophagosomes. Mediates the efficient delivery of autophagic plastid bodies to the vacuole, but not into the cytoplasm. This is ESCRT-related protein CHMP1B from Arabidopsis thaliana (Mouse-ear cress).